Reading from the N-terminus, the 337-residue chain is Phosphate acyltransferase (337 aa).

Belongs to the PlsX family. Homodimer. Probably interacts with PlsY.

The protein resides in the cytoplasm. It carries out the reaction a fatty acyl-[ACP] + phosphate = an acyl phosphate + holo-[ACP]. Its pathway is lipid metabolism; phospholipid metabolism. Functionally, catalyzes the reversible formation of acyl-phosphate (acyl-PO(4)) from acyl-[acyl-carrier-protein] (acyl-ACP). This enzyme utilizes acyl-ACP as fatty acyl donor, but not acyl-CoA. The protein is Phosphate acyltransferase of Polynucleobacter asymbioticus (strain DSM 18221 / CIP 109841 / QLW-P1DMWA-1) (Polynucleobacter necessarius subsp. asymbioticus).